We begin with the raw amino-acid sequence, 66 residues long: Small ribosomal subunit protein bS21 (66 aa).

The protein belongs to the bacterial ribosomal protein bS21 family.

This Rickettsia akari (strain Hartford) protein is Small ribosomal subunit protein bS21.